The chain runs to 259 residues: Bacillaene synthase dehydratase PksH (259 aa).

Residues aspartate 68 and glutamate 137 contribute to the active site.

It belongs to the enoyl-CoA hydratase/isomerase family.

It localises to the cytoplasm. Its pathway is antibiotic biosynthesis; bacillaene biosynthesis. In terms of biological role, involved in some intermediate steps for the synthesis of the antibiotic polyketide bacillaene which is involved in secondary metabolism. Catalyzes the dehydration of the (S)-3-hydroxy-3-methylglutaryl group tethered to PksL to a 3-methylglutaconyl moiety. This Bacillus subtilis (strain 168) protein is Bacillaene synthase dehydratase PksH (pksH).